We begin with the raw amino-acid sequence, 57 residues long: Large ribosomal subunit protein eL20 (57 aa).

Belongs to the eukaryotic ribosomal protein eL20 family. As to quaternary structure, part of the 50S ribosomal subunit. Binds 23S rRNA.

The protein is Large ribosomal subunit protein eL20 of Natronomonas pharaonis (strain ATCC 35678 / DSM 2160 / CIP 103997 / JCM 8858 / NBRC 14720 / NCIMB 2260 / Gabara) (Halobacterium pharaonis).